A 375-amino-acid chain; its full sequence is Actin, cytoplasmic (375 aa).

The protein belongs to the actin family.

Its subcellular location is the cytoplasm. The protein resides in the cytoskeleton. The enzyme catalyses ATP + H2O = ADP + phosphate + H(+). Functionally, actins are highly conserved proteins that are involved in various types of cell motility and are ubiquitously expressed in all eukaryotic cells. This Sterkiella nova (Ciliate) protein is Actin, cytoplasmic.